We begin with the raw amino-acid sequence, 456 residues long: Equilibrative nucleoside transporter 2 (456 aa).

A helical membrane pass occupies residues 13-33; the sequence is LVGISFFILGLGTLLPWNFFI. N-linked (GlcNAc...) asparagine glycosylation is present at Asn56. The next 5 helical transmembrane spans lie at 69–89, 98–118, 123–143, 161–181, and 192–212; these read WVTLLSQLPLLLFTLLNSFLY, ILGSLLAILLLFALTAALVKV, GLFFSVTMASVWFINSFCAVL, LFLSGQGLAGIFAALAMLMSL, and LGYFITPCVGILLSIVCYLSL. The disordered stretch occupies residues 248–277; it reads GVPISPQQASPTLDLDPEKEPEPEEPQKPG. Ser252 is subject to Phosphoserine. Over residues 263–275 the composition is skewed to basic and acidic residues; the sequence is DPEKEPEPEEPQK. 5 helical membrane passes run 288–308, 323–343, 360–380, 396–416, and 432–452; these read IWLTALCLVLVFTVTLSVFPA, WGLFFNPICCFLLFNVMDWLG, LLPLLVCLRFLFVPLFMLCHV, FITFMLLFAVSNGYLVSLTMC, and ALMTFFLALGLSCGASLSFLF.

This sequence belongs to the SLC29A/ENT transporter (TC 2.A.57) family.

The protein localises to the apical cell membrane. The protein resides in the basolateral cell membrane. Its subcellular location is the nucleus membrane. It carries out the reaction inosine(in) = inosine(out). The enzyme catalyses adenosine(in) = adenosine(out). It catalyses the reaction uridine(out) = uridine(in). The catalysed reaction is thymidine(in) = thymidine(out). It carries out the reaction hypoxanthine(out) = hypoxanthine(in). The enzyme catalyses adenine(out) = adenine(in). It catalyses the reaction cytidine(in) = cytidine(out). The catalysed reaction is thymine(out) = thymine(in). It carries out the reaction uracil(in) = uracil(out). The enzyme catalyses guanine(out) = guanine(in). It catalyses the reaction guanosine(in) = guanosine(out). Its function is as follows. Bidirectional uniporter involved in the facilitative transport of nucleosides and nucleobases, and contributes to maintaining their cellular homeostasis. Functions as a Na(+)-independent, passive transporter. Involved in the transport of nucleosides such as inosine, adenosine, uridine, thymidine, cytidine and guanosine. Also able to transport purine nucleobases (hypoxanthine, adenine, guanine) and pyrimidine nucleobases (thymine, uracil). Involved in nucleoside transport at basolateral membrane of kidney cells, allowing liver absorption of nucleoside metabolites. Mediates apical nucleoside uptake into Sertoli cells, thereby regulating the transport of nucleosides in testis across the blood-testis-barrier. Mediates both the influx and efflux of hypoxanthine in skeletal muscle microvascular endothelial cells to control the amount of intracellular hypoxanthine available for xanthine oxidase-mediated ROS production. The polypeptide is Equilibrative nucleoside transporter 2 (Mus musculus (Mouse)).